Here is a 435-residue protein sequence, read N- to C-terminus: GTPase Der (435 aa).

2 consecutive EngA-type G domains span residues 4–167 and 175–350; these read PTLA…PSED and IKFS…ENQT. Residues 10-17, 57-61, 119-122, 181-188, 228-232, and 293-296 contribute to the GTP site; these read GRPNVGKS, DTGGI, NKVD, DTAGI, and NKWD. Positions 351–435 constitute a KH-like domain; that stretch reads RRIQSSVLND…PIHIIARKRK (85 aa).

It belongs to the TRAFAC class TrmE-Era-EngA-EngB-Septin-like GTPase superfamily. EngA (Der) GTPase family. As to quaternary structure, associates with the 50S ribosomal subunit.

Its function is as follows. GTPase that plays an essential role in the late steps of ribosome biogenesis. In Lacticaseibacillus paracasei (strain ATCC 334 / BCRC 17002 / CCUG 31169 / CIP 107868 / KCTC 3260 / NRRL B-441) (Lactobacillus paracasei), this protein is GTPase Der.